Reading from the N-terminus, the 230-residue chain is Endonuclease NucS (230 aa).

Belongs to the NucS endonuclease family.

It is found in the cytoplasm. Its function is as follows. Cleaves both 3' and 5' ssDNA extremities of branched DNA structures. This chain is Endonuclease NucS, found in Corynebacterium glutamicum (strain ATCC 13032 / DSM 20300 / JCM 1318 / BCRC 11384 / CCUG 27702 / LMG 3730 / NBRC 12168 / NCIMB 10025 / NRRL B-2784 / 534).